The sequence spans 215 residues: UPF0502 protein YceH (215 aa).

It belongs to the UPF0502 family.

The sequence is that of UPF0502 protein YceH from Salmonella schwarzengrund (strain CVM19633).